Here is a 200-residue protein sequence, read N- to C-terminus: Large ribosomal subunit protein uL22c (200 aa).

Belongs to the universal ribosomal protein uL22 family. In terms of assembly, part of the 50S ribosomal subunit.

It localises to the plastid. The protein resides in the chloroplast. This protein binds specifically to 23S rRNA. Functionally, the globular domain of the protein is located near the polypeptide exit tunnel on the outside of the subunit, while an extended beta-hairpin is found that lines the wall of the exit tunnel in the center of the 70S ribosome. This is Large ribosomal subunit protein uL22c (rpl22) from Medicago sativa (Alfalfa).